The following is a 503-amino-acid chain: Variant surface glycoprotein AnTaT 1.1 (503 aa).

A signal peptide spans 1–29 (MVTKERNAALKIVMLVASALTLHPQQALA). Disulfide bonds link cysteine 45–cysteine 172 and cysteine 154–cysteine 209. The N-linked (GlcNAc...) asparagine glycan is linked to asparagine 113. N-linked (GlcNAc...) asparagine glycans are attached at residues asparagine 419 and asparagine 432. The GPI-anchor amidated aspartate moiety is linked to residue aspartate 480. Residues 481–503 (SSILLTKNFALSVVSAALVALLF) constitute a propeptide, removed in mature form.

It localises to the cell membrane. Functionally, VSG forms a coat on the surface of the parasite. The trypanosome evades the immune response of the host by expressing a series of antigenically distinct VSGs from an estimated 1000 VSG genes. In Trypanosoma brucei brucei, this protein is Variant surface glycoprotein AnTaT 1.1.